Reading from the N-terminus, the 600-residue chain is Myelin expression factor 2 (600 aa).

The disordered stretch occupies residues 1–101; sequence MADANKAEVP…GEKKGPNRNR (101 aa). Thr13 carries the post-translational modification Phosphothreonine. Residue Ser17 is modified to Phosphoserine. Residues 27-42 are compositionally biased toward basic and acidic residues; the sequence is GEPRREPHPAEAEKQQ. A Glycyl lysine isopeptide (Lys-Gly) (interchain with G-Cter in SUMO2) cross-link involves residue Lys53. Basic and acidic residues-rich tracts occupy residues 54 to 72 and 83 to 96; these read MEND…EKST and YSKD…EKKG. RRM domains follow at residues 100–178 and 233–310; these read NRVF…EDPD and STIF…MDDK. Omega-N-methylarginine is present on Arg406. At Ser431 the chain carries Phosphoserine. Residues 523–599 enclose the RRM 3 domain; it reads NQIFVRNLPF…REIDVRLDRN (77 aa).

As to quaternary structure, monomer.

Its subcellular location is the nucleus. Transcriptional repressor of the myelin basic protein gene (MBP). Binds to the proximal MB1 element 5'-TTGTCC-3' of the MBP promoter. Its binding to MB1 and function are inhibited by PURA. The protein is Myelin expression factor 2 (MYEF2) of Homo sapiens (Human).